The primary structure comprises 196 residues: Urease accessory protein UreE (196 aa).

The segment at 150-196 is disordered; the sequence is RGAYSGGHDHGHAHAHSHAEAHSHAHGESHSHSHSHSHDDHHHHDHD. The span at 156 to 196 shows a compositional bias: basic and acidic residues; the sequence is GHDHGHAHAHSHAEAHSHAHGESHSHSHSHSHDDHHHHDHD.

This sequence belongs to the UreE family.

The protein localises to the cytoplasm. Involved in urease metallocenter assembly. Binds nickel. Probably functions as a nickel donor during metallocenter assembly. In Mesorhizobium japonicum (strain LMG 29417 / CECT 9101 / MAFF 303099) (Mesorhizobium loti (strain MAFF 303099)), this protein is Urease accessory protein UreE.